Consider the following 177-residue polypeptide: Putative pre-16S rRNA nuclease (177 aa).

Belongs to the YqgF nuclease family.

It localises to the cytoplasm. Functionally, could be a nuclease involved in processing of the 5'-end of pre-16S rRNA. The protein is Putative pre-16S rRNA nuclease of Psychrobacter arcticus (strain DSM 17307 / VKM B-2377 / 273-4).